Here is a 508-residue protein sequence, read N- to C-terminus: Maturase K (508 aa).

The protein belongs to the intron maturase 2 family. MatK subfamily.

The protein resides in the plastid. The protein localises to the chloroplast. Functionally, usually encoded in the trnK tRNA gene intron. Probably assists in splicing its own and other chloroplast group II introns. The chain is Maturase K from Manilkara zapota (Sapodilla plum).